A 71-amino-acid chain; its full sequence is Omega-conotoxin-like CnVIIF (71 aa).

3 cysteine pairs are disulfide-bonded: Cys46–Cys61, Cys53–Cys65, and Cys60–Cys70. Cys70 is modified (cysteine amide; in CnVIID).

Belongs to the conotoxin M superfamily. Expressed by the venom duct.

It localises to the secreted. Omega-conotoxins act at presynaptic membranes, they bind and block voltage-gated calcium channels (Cav). The chain is Omega-conotoxin-like CnVIIF from Conus consors (Singed cone).